Reading from the N-terminus, the 298-residue chain is Acetylglutamate kinase (298 aa).

Substrate is bound by residues 61 to 62, R83, and N188; that span reads GG.

The protein belongs to the acetylglutamate kinase family. ArgB subfamily.

Its subcellular location is the cytoplasm. It carries out the reaction N-acetyl-L-glutamate + ATP = N-acetyl-L-glutamyl 5-phosphate + ADP. It functions in the pathway amino-acid biosynthesis; L-arginine biosynthesis; N(2)-acetyl-L-ornithine from L-glutamate: step 2/4. Functionally, catalyzes the ATP-dependent phosphorylation of N-acetyl-L-glutamate. This is Acetylglutamate kinase from Syntrophobacter fumaroxidans (strain DSM 10017 / MPOB).